Consider the following 611-residue polypeptide: Dihydroxy-acid dehydratase (611 aa).

Asp-82 contacts Mg(2+). Cys-123 contacts [2Fe-2S] cluster. Mg(2+)-binding residues include Asp-124 and Lys-125. Lys-125 carries the N6-carboxylysine modification. Residue Cys-192 participates in [2Fe-2S] cluster binding. Glu-489 provides a ligand contact to Mg(2+). Ser-515 functions as the Proton acceptor in the catalytic mechanism. Basic and acidic residues predominate over residues 565–574 (ERRKAEEARG). The tract at residues 565-586 (ERRKAEEARGKKAFTPPTRQRE) is disordered.

The protein belongs to the IlvD/Edd family. In terms of assembly, homodimer. [2Fe-2S] cluster serves as cofactor. Requires Mg(2+) as cofactor.

It carries out the reaction (2R)-2,3-dihydroxy-3-methylbutanoate = 3-methyl-2-oxobutanoate + H2O. The catalysed reaction is (2R,3R)-2,3-dihydroxy-3-methylpentanoate = (S)-3-methyl-2-oxopentanoate + H2O. The protein operates within amino-acid biosynthesis; L-isoleucine biosynthesis; L-isoleucine from 2-oxobutanoate: step 3/4. It participates in amino-acid biosynthesis; L-valine biosynthesis; L-valine from pyruvate: step 3/4. Functionally, functions in the biosynthesis of branched-chain amino acids. Catalyzes the dehydration of (2R,3R)-2,3-dihydroxy-3-methylpentanoate (2,3-dihydroxy-3-methylvalerate) into 2-oxo-3-methylpentanoate (2-oxo-3-methylvalerate) and of (2R)-2,3-dihydroxy-3-methylbutanoate (2,3-dihydroxyisovalerate) into 2-oxo-3-methylbutanoate (2-oxoisovalerate), the penultimate precursor to L-isoleucine and L-valine, respectively. The protein is Dihydroxy-acid dehydratase of Parabacteroides distasonis (strain ATCC 8503 / DSM 20701 / CIP 104284 / JCM 5825 / NCTC 11152).